Here is a 529-residue protein sequence, read N- to C-terminus: Hyaluronidase PH-20 (529 aa).

The first 35 residues, 1–35 (MGAFTFKHSFFGSFVECSGVLQTVFIFLLIPCCLA), serve as a signal peptide directing secretion. Disulfide bonds link cysteine 59/cysteine 351 and cysteine 223/cysteine 237. Asparagine 81 is a glycosylation site (N-linked (GlcNAc...) asparagine). The active-site Proton donor is the glutamate 147. N-linked (GlcNAc...) asparagine glycans are attached at residues asparagine 165 and asparagine 179. Residues asparagine 253 and asparagine 368 are each glycosylated (N-linked (GlcNAc...) asparagine). Disulfide bonds link cysteine 376/cysteine 387, cysteine 381/cysteine 435, and cysteine 437/cysteine 464. N-linked (GlcNAc...) asparagine glycosylation is present at asparagine 401. The disordered stretch occupies residues 478–502 (DEPPITDDTSQNQDSISDITSSAPP). The segment covering 487 to 502 (SQNQDSISDITSSAPP) has biased composition (polar residues). Serine 492 carries GPI-anchor amidated serine lipidation. A propeptide spans 493 to 529 (ISDITSSAPPSSHILPKDLSWCLFLLSIFSQHWKYLL) (removed in mature form).

It belongs to the glycosyl hydrolase 56 family. In terms of processing, endoproteolysis (toward the C-terminus producing two disulfide-linked fragments) could activate PH-20. In terms of tissue distribution, testis.

It localises to the cell membrane. It carries out the reaction Random hydrolysis of (1-&gt;4)-linkages between N-acetyl-beta-D-glucosamine and D-glucuronate residues in hyaluronate.. Functionally, involved in sperm-egg adhesion. Upon fertilization sperm must first penetrate a layer of cumulus cells that surrounds the egg before reaching the zona pellucida. The cumulus cells are embedded in a matrix containing hyaluronic acid which is formed prior to ovulation. This protein aids in penetrating the layer of cumulus cells by digesting hyaluronic acid. The protein is Hyaluronidase PH-20 (SPAM1) of Cavia porcellus (Guinea pig).